A 182-amino-acid polypeptide reads, in one-letter code: NADH-quinone oxidoreductase subunit B (182 aa).

The [4Fe-4S] cluster site is built by Cys-47, Cys-48, Cys-113, and Cys-142.

It belongs to the complex I 20 kDa subunit family. In terms of assembly, NDH-1 is composed of 14 different subunits. Subunits NuoB, C, D, E, F, and G constitute the peripheral sector of the complex. The cofactor is [4Fe-4S] cluster.

The protein localises to the cell inner membrane. It catalyses the reaction a quinone + NADH + 5 H(+)(in) = a quinol + NAD(+) + 4 H(+)(out). In terms of biological role, NDH-1 shuttles electrons from NADH, via FMN and iron-sulfur (Fe-S) centers, to quinones in the respiratory chain. The immediate electron acceptor for the enzyme in this species is believed to be ubiquinone. Couples the redox reaction to proton translocation (for every two electrons transferred, four hydrogen ions are translocated across the cytoplasmic membrane), and thus conserves the redox energy in a proton gradient. The sequence is that of NADH-quinone oxidoreductase subunit B from Anaeromyxobacter dehalogenans (strain 2CP-1 / ATCC BAA-258).